The sequence spans 88 residues: Acyl-CoA-binding domain-containing protein 7 (88 aa).

Residues 3-88 (LQADFDKAAK…AKELIEKYGI (86 aa)) enclose the ACB domain. An acyl-CoA contacts are provided by residues Arg15, 30–34 (YGLYK), Lys56, and Tyr75.

The protein belongs to the ACBD7 family.

Functionally, binds medium- and long-chain acyl-CoA esters. This chain is Acyl-CoA-binding domain-containing protein 7 (ACBD7), found in Bos taurus (Bovine).